Consider the following 421-residue polypeptide: UDP-N-acetylglucosamine 1-carboxyvinyltransferase (421 aa).

22–23 (KN) contacts phosphoenolpyruvate. Position 93 (arginine 93) interacts with UDP-N-acetyl-alpha-D-glucosamine. Cysteine 117 acts as the Proton donor in catalysis. Residue cysteine 117 is modified to 2-(S-cysteinyl)pyruvic acid O-phosphothioketal. UDP-N-acetyl-alpha-D-glucosamine contacts are provided by residues 122–126 (RPVDL), aspartate 308, and isoleucine 330.

Belongs to the EPSP synthase family. MurA subfamily.

The protein resides in the cytoplasm. It carries out the reaction phosphoenolpyruvate + UDP-N-acetyl-alpha-D-glucosamine = UDP-N-acetyl-3-O-(1-carboxyvinyl)-alpha-D-glucosamine + phosphate. It functions in the pathway cell wall biogenesis; peptidoglycan biosynthesis. Its function is as follows. Cell wall formation. Adds enolpyruvyl to UDP-N-acetylglucosamine. This chain is UDP-N-acetylglucosamine 1-carboxyvinyltransferase, found in Pseudomonas syringae pv. tomato (strain ATCC BAA-871 / DC3000).